The primary structure comprises 387 residues: 3-hydroxyisobutyryl-CoA hydrolase-like protein 5 (387 aa).

Alanine 2 is modified (N-acetylalanine).

This sequence belongs to the enoyl-CoA hydratase/isomerase family.

This chain is 3-hydroxyisobutyryl-CoA hydrolase-like protein 5, found in Arabidopsis thaliana (Mouse-ear cress).